Reading from the N-terminus, the 266-residue chain is DLA class II histocompatibility antigen, DR-1 beta chain (266 aa).

The first 29 residues, 1–29 (MVCLCFLGGSWMTALMLILMVLNPPFAWA), serve as a signal peptide directing secretion. The interval 30–124 (RDTPPHFLEV…IESFTVQRRV (95 aa)) is beta-1. Residues 30 to 227 (RDTPPHFLEV…RAQSDSAQSK (198 aa)) lie on the Extracellular side of the membrane. 2 disulfides stabilise this stretch: C44–C108 and C146–C202. N48 is a glycosylation site (N-linked (GlcNAc...) asparagine). Residues 125–227 (EPTVTVYPTK…RAQSDSAQSK (103 aa)) form a beta-2 region. The region spanning 126 to 214 (PTVTVYPTKT…EHPSLTSPVT (89 aa)) is the Ig-like C1-type domain. Residues 228-250 (MLSGIGGFVLGLLFLAVGLFIYF) traverse the membrane as a helical segment. Topologically, residues 251–266 (RNQKGHSGLQPTGLLS) are cytoplasmic.

It belongs to the MHC class II family.

Its subcellular location is the membrane. The polypeptide is DLA class II histocompatibility antigen, DR-1 beta chain (Canis lupus familiaris (Dog)).